The following is a 331-amino-acid chain: High-affinity nickel-transport protein NixA (331 aa).

A run of 7 helical transmembrane segments spans residues Leu-3 to Phe-23, Met-77 to Ala-97, Val-110 to Ile-130, Pro-184 to Leu-204, Val-213 to Leu-233, Ile-259 to Ile-279, and Asp-302 to Trp-322.

This sequence belongs to the NiCoT transporter (TC 2.A.52) family.

The protein resides in the cell inner membrane. Functionally, high-affinity nickel intake protein. Imports nickel ions in an energy-dependent fashion. Necessary for the expression of catalytically active urease. The polypeptide is High-affinity nickel-transport protein NixA (nixA) (Helicobacter pylori (strain J99 / ATCC 700824) (Campylobacter pylori J99)).